We begin with the raw amino-acid sequence, 244 residues long: MSDYLELLPAVDITEGRAVQLAQGVAGSERTYGDPVAAAMRWQEAGAEWIHLVDLDAAFGRGSNRELQAEIVGALDVQVEMSGGIRDDESLAAALATGCRRVNIGTAALEQPEWCRRVIAEHGDRVAIGLDVRGRTLAARGWTKDGGDLYETLARLDAEGCARYVVTDVNKDGMLQGPNLQLLRDVCAATSAPVVASGGVTTLADIEALMELVPVGVEGAIAGTALYEGRFTLEDALALTRGGR.

Asp12 acts as the Proton acceptor in catalysis. The Proton donor role is filled by Asp131.

It belongs to the HisA/HisF family.

It localises to the cytoplasm. The catalysed reaction is 1-(5-phospho-beta-D-ribosyl)-5-[(5-phospho-beta-D-ribosylamino)methylideneamino]imidazole-4-carboxamide = 5-[(5-phospho-1-deoxy-D-ribulos-1-ylimino)methylamino]-1-(5-phospho-beta-D-ribosyl)imidazole-4-carboxamide. Its pathway is amino-acid biosynthesis; L-histidine biosynthesis; L-histidine from 5-phospho-alpha-D-ribose 1-diphosphate: step 4/9. This chain is 1-(5-phosphoribosyl)-5-[(5-phosphoribosylamino)methylideneamino] imidazole-4-carboxamide isomerase, found in Nocardioides sp. (strain ATCC BAA-499 / JS614).